The following is a 187-amino-acid chain: Small ribosomal subunit protein uS5 (187 aa).

The interval 1 to 20 (MAERENRRDRRDDRSREETP) is disordered. Residues 22–85 (FADRLVAINR…EQAKRQMIRV (64 aa)) enclose the S5 DRBM domain.

It belongs to the universal ribosomal protein uS5 family. As to quaternary structure, part of the 30S ribosomal subunit. Contacts proteins S4 and S8.

In terms of biological role, with S4 and S12 plays an important role in translational accuracy. Located at the back of the 30S subunit body where it stabilizes the conformation of the head with respect to the body. In Cereibacter sphaeroides (strain ATCC 17029 / ATH 2.4.9) (Rhodobacter sphaeroides), this protein is Small ribosomal subunit protein uS5.